The following is a 120-amino-acid chain: U-scoloptoxin(16)-Er2a (120 aa).

The signal sequence occupies residues 1–26 (MNTVSVVQFLAVGCAVFVLYGRGVFA).

Belongs to the scoloptoxin-16 family. In terms of processing, contains 4 disulfide bonds. As to expression, expressed by the venom gland.

It localises to the secreted. This chain is U-scoloptoxin(16)-Er2a, found in Ethmostigmus rubripes (Giant centipede).